We begin with the raw amino-acid sequence, 262 residues long: Ribosomal RNA small subunit methyltransferase A (262 aa).

Positions 18, 43, 65, 91, and 110 each coordinate S-adenosyl-L-methionine.

This sequence belongs to the class I-like SAM-binding methyltransferase superfamily. rRNA adenine N(6)-methyltransferase family. RsmA subfamily.

The protein resides in the cytoplasm. It catalyses the reaction adenosine(1518)/adenosine(1519) in 16S rRNA + 4 S-adenosyl-L-methionine = N(6)-dimethyladenosine(1518)/N(6)-dimethyladenosine(1519) in 16S rRNA + 4 S-adenosyl-L-homocysteine + 4 H(+). Its function is as follows. Specifically dimethylates two adjacent adenosines (A1518 and A1519) in the loop of a conserved hairpin near the 3'-end of 16S rRNA in the 30S particle. May play a critical role in biogenesis of 30S subunits. The protein is Ribosomal RNA small subunit methyltransferase A of Ehrlichia ruminantium (strain Gardel).